Consider the following 68-residue polypeptide: Antimicrobial peptide VpCT3 (68 aa).

Residues 1 to 23 (MKTQIVILIVAVLVLQLVSQSDA) form the signal peptide. Leu-36 carries the post-translational modification Leucine amide. A propeptide spanning residues 37–68 (GKRGLKNLDQYNDLFDGEISDADIKFLQDLMR) is cleaved from the precursor.

The protein belongs to the non-disulfide-bridged peptide (NDBP) superfamily. Short antimicrobial peptide (group 4) family. In terms of tissue distribution, expressed by the venom gland.

Its subcellular location is the secreted. The protein resides in the target cell membrane. Antimicrobial peptide with weak activity against all bacteria tested (MIC&gt;100 uM) and all yeasts tested (MIC&gt;200 uM). Also provokes weak hemolysis on human erythrocytes (HC(50)=83.7 uM). The polypeptide is Antimicrobial peptide VpCT3 (Mesomexovis punctatus (Scorpion)).